Consider the following 227-residue polypeptide: Thymidylate kinase (227 aa).

16–23 (GIDGAGKT) contacts ATP.

This sequence belongs to the thymidylate kinase family.

The catalysed reaction is dTMP + ATP = dTDP + ADP. In terms of biological role, phosphorylation of dTMP to form dTDP in both de novo and salvage pathways of dTTP synthesis. This Xanthomonas campestris pv. campestris (strain 8004) protein is Thymidylate kinase.